We begin with the raw amino-acid sequence, 143 residues long: Transcriptional regulator MraZ (143 aa).

SpoVT-AbrB domains are found at residues 5–47 (SHAP…PMAE) and 76–119 (AADD…DAQR).

This sequence belongs to the MraZ family. In terms of assembly, forms oligomers.

It is found in the cytoplasm. The protein resides in the nucleoid. In Frankia casuarinae (strain DSM 45818 / CECT 9043 / HFP020203 / CcI3), this protein is Transcriptional regulator MraZ.